The primary structure comprises 123 residues: NADH-quinone oxidoreductase subunit A (123 aa).

3 consecutive transmembrane segments (helical) span residues 11–31 (YLPI…IMML), 68–88 (LVAI…PWAI), and 93–113 (IGKI…IGFI).

This sequence belongs to the complex I subunit 3 family. As to quaternary structure, NDH-1 is composed of 14 different subunits. Subunits NuoA, H, J, K, L, M, N constitute the membrane sector of the complex.

Its subcellular location is the cell inner membrane. The catalysed reaction is a quinone + NADH + 5 H(+)(in) = a quinol + NAD(+) + 4 H(+)(out). NDH-1 shuttles electrons from NADH, via FMN and iron-sulfur (Fe-S) centers, to quinones in the respiratory chain. The immediate electron acceptor for the enzyme in this species is believed to be ubiquinone. Couples the redox reaction to proton translocation (for every two electrons transferred, four hydrogen ions are translocated across the cytoplasmic membrane), and thus conserves the redox energy in a proton gradient. This chain is NADH-quinone oxidoreductase subunit A, found in Rickettsia typhi (strain ATCC VR-144 / Wilmington).